The following is a 181-amino-acid chain: MDDLTAQALKEFTARYCDAWHEEHKSWPLSEELYGVPSPCIISTTEDAVYWQPQPFTGEQNVNAVERAFDIVIQSAIHTFYTTQFAGDIHAQFGDIKLTLLQTWSEDDFRRVQENLIGHLVTQKRLKLPPTLFIATLEEELEVISVCNLSGEVCKETLGTRKRTHLASNLAEFLNQLKPLL.

Belongs to the Syd family.

It localises to the cell inner membrane. Functionally, interacts with the SecY protein in vivo. May bind preferentially to an uncomplexed state of SecY, thus functioning either as a chelating agent for excess SecY in the cell or as a regulatory factor that negatively controls the translocase function. This chain is Protein Syd, found in Shigella dysenteriae serotype 1 (strain Sd197).